Consider the following 398-residue polypeptide: Nucleotide-sugar uncharacterized transporter 2 (398 aa).

The next 10 helical transmembrane spans lie at 54 to 74, 84 to 104, 119 to 139, 150 to 170, 179 to 199, 201 to 221, 242 to 262, 271 to 291, 299 to 319, and 322 to 342; these read FCGPVVAMSFNFVVAVGIILA, FNFPIFLTLIHYTVAWILLAF, TTPFSSLFSLGAVMAFASGLA, FYQMAKIAVTPTIVLAEFVLF, VMALAVVSLGVAIATVTDLEF, LFGALVAVAWIIPSAINKILW, FTVFFLLALMPWLDPPGVLLF, AILISALLGFLLQWSGALALG, VVLGQFKTCVILLGGYVIFGS, and GFISICGAIAALGGMSVYTWL.

Belongs to the TPT transporter family. TPT (TC 2.A.7.9) subfamily.

Its subcellular location is the membrane. The protein is Nucleotide-sugar uncharacterized transporter 2 of Arabidopsis thaliana (Mouse-ear cress).